The following is a 146-amino-acid chain: Transcriptional repressor NrdR (146 aa).

A zinc finger lies at 3-34 (CPFCQNPDTKVIDTRISDDGHSIRRRRVCPKC). The region spanning 46–136 (LLVTKRSGGV…VYQNFAGLED (91 aa)) is the ATP-cone domain.

The protein belongs to the NrdR family. Zn(2+) is required as a cofactor.

Functionally, negatively regulates transcription of bacterial ribonucleotide reductase nrd genes and operons by binding to NrdR-boxes. This chain is Transcriptional repressor NrdR, found in Bifidobacterium longum (strain NCC 2705).